A 782-amino-acid polypeptide reads, in one-letter code: cGMP-specific 3',5'-cyclic phosphodiesterase gamma (782 aa).

Topologically, residues 1 to 69 are cytoplasmic; that stretch reads MKHMFKNILF…LCDNMYSKKY (69 aa). A helical transmembrane segment spans residues 70-90; the sequence is VILVSHLISLLLMYSVCLIVG. Residues 91–97 are Extracellular-facing; sequence NINDLFS. A helical transmembrane segment spans residues 98 to 118; it reads VLKLTYILLHTFTAINIILIL. The Cytoplasmic segment spans residues 119 to 135; that stretch reads TLHATHYVEMFKSIKGE. A helical transmembrane segment spans residues 136-156; it reads IFIFYIMMIFVIWCSWLFILF. Residues 157 to 181 are Extracellular-facing; the sequence is NNIKDLLPIVVNVNNFLYATYANNK. A helical membrane pass occupies residues 182–202; that stretch reads INIVLGFFAYLPIFYLITIIP. The Cytoplasmic segment spans residues 203–208; sequence CRICYS. A helical transmembrane segment spans residues 209–229; that stretch reads CAFDILFFIMKVAIFSVYYLI. The Extracellular portion of the chain corresponds to 230 to 239; that stretch reads TMKSYILTDN. Residues 240–260 traverse the membrane as a helical segment; it reads IFMIISALVGSLFIFVIRYII. Topologically, residues 261–782 are cytoplasmic; that stretch reads EIQRRLSFHN…YAPNLNIYKL (522 aa). Positions 376–396 are disordered; it reads GSKEEPEAESESECVDESKEG. Over residues 381 to 390 the composition is skewed to acidic residues; it reads PEAESESECV. The PDEase domain maps to 423-751; it reads YEEKENEILK…SKWTKIEKDE (329 aa). Catalysis depends on His504, which acts as the Proton donor. A nucleoside 3',5'-cyclic phosphate is bound at residue 504–508; it reads HNSIH. 4 residues coordinate a divalent metal cation: His508, His544, Asp545, and Asp654. A nucleoside 3',5'-cyclic phosphate is bound by residues Asp545, Asp654, and Gln706.

The protein belongs to the cyclic nucleotide phosphodiesterase family. The cofactor is a divalent metal cation.

The protein localises to the membrane. The protein resides in the endoplasmic reticulum membrane. The enzyme catalyses 3',5'-cyclic GMP + H2O = GMP + H(+). It functions in the pathway purine metabolism; 3',5'-cyclic GMP degradation; GMP from 3',5'-cyclic GMP: step 1/1. Specifically hydrolyzes the second messenger cGMP, which is a key regulator of many important physiological processes. Probably by regulating cGMP levels, required for sporozoite motility and invasion of the mosquito salivary glands. The polypeptide is cGMP-specific 3',5'-cyclic phosphodiesterase gamma (Plasmodium yoelii).